A 300-amino-acid chain; its full sequence is Ribonuclease HIII (300 aa).

In terms of domain architecture, RNase H type-2 spans 83–300 (IPIIGSDEVG…THKAQALLTK (218 aa)). 3 residues coordinate a divalent metal cation: aspartate 89, glutamate 90, and aspartate 194.

It belongs to the RNase HII family. RnhC subfamily. It depends on Mn(2+) as a cofactor. Requires Mg(2+) as cofactor.

The protein localises to the cytoplasm. It catalyses the reaction Endonucleolytic cleavage to 5'-phosphomonoester.. In terms of biological role, endonuclease that specifically degrades the RNA of RNA-DNA hybrids. In Streptococcus pyogenes serotype M5 (strain Manfredo), this protein is Ribonuclease HIII.